Reading from the N-terminus, the 1372-residue chain is Serine protease pic autotransporter (1372 aa).

The first 55 residues, 1-55, serve as a signal peptide directing secretion; it reads MNKVYSLKYCPVTGGLIAVSELARRVIKKTCRRLTHILLAGIPAICLCYSQISQA. A Peptidase S6 domain is found at 56–301; it reads GIVRSDIAYQ…NVIPTDYLNQ (246 aa). Residues histidine 127, aspartate 155, and serine 258 each act as charge relay system in the active site. An Autotransporter domain is found at 1106–1372; sequence DTNGDAGAWA…AVNANFRYMF (267 aa).

Cleaved to release the mature protein from the outer membrane.

It is found in the periplasm. It localises to the secreted. The protein localises to the cell surface. Its subcellular location is the cell outer membrane. In terms of biological role, involved in intestinal colonization, displays in vitro mucinolytic activity, serum resistance, and hemagglutination. Important to penetrate the intestinal mucus layer. The polypeptide is Serine protease pic autotransporter (pic) (Shigella flexneri).